A 166-amino-acid polypeptide reads, in one-letter code: Packaging efficiency factor P6 (166 aa).

The segment at 134–166 is disordered; the sequence is ILPESAGDQQEAEPVPSVGDQQETAPRKRFRAI.

As to quaternary structure, heterodimer of P6 and P9; further multimerizes as hexamers of heterodimers. Part of the dodecameric portal complex that is composed of the packaging efficiency factor P6, the DNA packaging ATPase P9, and the internal heterododecamer P20/P22 which spans the virion inner membrane.

The protein resides in the virion. In terms of biological role, together with the packaging ATPase P9, forms the external part of the portal vertex that is embeded in the capsid and which plays critical roles in genome packaging and genome ejection. Both proteins multimerize as a single ring-shaped heterdodecamer arranged around a central channel. This Acinetobacter calcoaceticus (Arthrobacter siderocapsulatus) protein is Packaging efficiency factor P6 (VI).